The sequence spans 784 residues: Protein translocase subunit SecA 2 (784 aa).

ATP contacts are provided by residues Gln94, 112–116, and Asp501; that span reads GEGKT.

This sequence belongs to the SecA family. As to quaternary structure, monomer and homodimer. Part of the essential Sec protein translocation apparatus which comprises SecA, SecYEG and auxiliary proteins SecDF. Other proteins may also be involved.

It localises to the cell membrane. The protein resides in the cytoplasm. The enzyme catalyses ATP + H2O + cellular proteinSide 1 = ADP + phosphate + cellular proteinSide 2.. In terms of biological role, part of the Sec protein translocase complex. Interacts with the SecYEG preprotein conducting channel. Has a central role in coupling the hydrolysis of ATP to the transfer of proteins into and across the cell membrane, serving as an ATP-driven molecular motor driving the stepwise translocation of polypeptide chains across the membrane. The sequence is that of Protein translocase subunit SecA 2 from Mycolicibacterium smegmatis (strain ATCC 700084 / mc(2)155) (Mycobacterium smegmatis).